Here is a 166-residue protein sequence, read N- to C-terminus: Probable chemoreceptor glutamine deamidase CheD (166 aa).

This sequence belongs to the CheD family.

The catalysed reaction is L-glutaminyl-[protein] + H2O = L-glutamyl-[protein] + NH4(+). In terms of biological role, probably deamidates glutamine residues to glutamate on methyl-accepting chemotaxis receptors (MCPs), playing an important role in chemotaxis. The polypeptide is Probable chemoreceptor glutamine deamidase CheD (Oceanobacillus iheyensis (strain DSM 14371 / CIP 107618 / JCM 11309 / KCTC 3954 / HTE831)).